A 219-amino-acid polypeptide reads, in one-letter code: Probable glucosamine 6-phosphate N-acetyltransferase (219 aa).

Residues 42–198 (MKVRPLKDTD…EGPTLKRNAT (157 aa)) enclose the N-acetyltransferase domain. Substrate-binding positions include Thr64, 111-114 (KFIH), and 123-125 (EDV). Residue 133–138 (GKQLGK) coordinates acetyl-CoA. Residues 154 to 155 (YK) and Arg186 contribute to the substrate site.

Belongs to the acetyltransferase family. GNA1 subfamily.

The enzyme catalyses D-glucosamine 6-phosphate + acetyl-CoA = N-acetyl-D-glucosamine 6-phosphate + CoA + H(+). It functions in the pathway nucleotide-sugar biosynthesis; UDP-N-acetyl-alpha-D-glucosamine biosynthesis; N-acetyl-alpha-D-glucosamine 1-phosphate from alpha-D-glucosamine 6-phosphate (route I): step 1/2. The sequence is that of Probable glucosamine 6-phosphate N-acetyltransferase from Drosophila melanogaster (Fruit fly).